The sequence spans 580 residues: Amino-acid acetyltransferase, mitochondrial (580 aa).

The 158-residue stretch at 403–560 folds into the N-acetyltransferase domain; sequence LTMQNLFDDK…KLRHQNGVVD (158 aa).

Belongs to the acetyltransferase family.

It is found in the mitochondrion. The catalysed reaction is L-glutamate + acetyl-CoA = N-acetyl-L-glutamate + CoA + H(+). Its pathway is amino-acid biosynthesis; L-arginine biosynthesis; N(2)-acetyl-L-ornithine from L-glutamate: step 1/4. N-acetylglutamate synthase involved in arginine biosynthesis. The protein is Amino-acid acetyltransferase, mitochondrial (ARG2) of Candida albicans (strain SC5314 / ATCC MYA-2876) (Yeast).